Reading from the N-terminus, the 216-residue chain is Penicillin-binding protein activator LpoB (216 aa).

An N-terminal signal peptide occupies residues 1-20; sequence MIKNLSRYALVTAFALFLSG. Residue Cys21 is the site of N-palmitoyl cysteine attachment. Cys21 is lipidated: S-diacylglycerol cysteine. Residues 28–77 are disordered; that stretch reads QPAPVDEAKPGTEQPAQPTQPVPTVPSVPTVPAQPGPIEHPDQTSQPAPR.

This sequence belongs to the LpoB family. In terms of assembly, interacts with PBP1b.

The protein localises to the cell outer membrane. In terms of biological role, regulator of peptidoglycan synthesis that is essential for the function of penicillin-binding protein 1B (PBP1b). The protein is Penicillin-binding protein activator LpoB of Enterobacter sp. (strain 638).